Here is a 172-residue protein sequence, read N- to C-terminus: 3-hydroxydecanoyl-[acyl-carrier-protein] dehydratase (172 aa).

The active site involves histidine 71.

Belongs to the thioester dehydratase family. FabA subfamily. As to quaternary structure, homodimer.

It localises to the cytoplasm. The catalysed reaction is a (3R)-hydroxyacyl-[ACP] = a (2E)-enoyl-[ACP] + H2O. The enzyme catalyses (3R)-hydroxydecanoyl-[ACP] = (2E)-decenoyl-[ACP] + H2O. It catalyses the reaction (2E)-decenoyl-[ACP] = (3Z)-decenoyl-[ACP]. It functions in the pathway lipid metabolism; fatty acid biosynthesis. In terms of biological role, necessary for the introduction of cis unsaturation into fatty acids. Catalyzes the dehydration of (3R)-3-hydroxydecanoyl-ACP to E-(2)-decenoyl-ACP and then its isomerization to Z-(3)-decenoyl-ACP. Can catalyze the dehydratase reaction for beta-hydroxyacyl-ACPs with saturated chain lengths up to 16:0, being most active on intermediate chain length. In Salmonella arizonae (strain ATCC BAA-731 / CDC346-86 / RSK2980), this protein is 3-hydroxydecanoyl-[acyl-carrier-protein] dehydratase.